Consider the following 475-residue polypeptide: Ribulose bisphosphate carboxylase large chain (475 aa).

Positions 1 to 2 (MS) are excised as a propeptide. Pro3 bears the N-acetylproline mark. N6,N6,N6-trimethyllysine is present on Lys14. Asn123 and Thr173 together coordinate substrate. The active-site Proton acceptor is Lys175. A substrate-binding site is contributed by Lys177. 3 residues coordinate Mg(2+): Lys201, Asp203, and Glu204. Lys201 carries the N6-carboxylysine modification. The active-site Proton acceptor is the His294. Residues Arg295, His327, and Ser379 each contribute to the substrate site.

It belongs to the RuBisCO large chain family. Type I subfamily. In terms of assembly, heterohexadecamer of 8 large chains and 8 small chains; disulfide-linked. The disulfide link is formed within the large subunit homodimers. Mg(2+) is required as a cofactor. The disulfide bond which can form in the large chain dimeric partners within the hexadecamer appears to be associated with oxidative stress and protein turnover.

It localises to the plastid. The protein localises to the chloroplast. The catalysed reaction is 2 (2R)-3-phosphoglycerate + 2 H(+) = D-ribulose 1,5-bisphosphate + CO2 + H2O. It catalyses the reaction D-ribulose 1,5-bisphosphate + O2 = 2-phosphoglycolate + (2R)-3-phosphoglycerate + 2 H(+). Its function is as follows. RuBisCO catalyzes two reactions: the carboxylation of D-ribulose 1,5-bisphosphate, the primary event in carbon dioxide fixation, as well as the oxidative fragmentation of the pentose substrate in the photorespiration process. Both reactions occur simultaneously and in competition at the same active site. The protein is Ribulose bisphosphate carboxylase large chain of Calycanthus floridus var. glaucus (Eastern sweetshrub).